We begin with the raw amino-acid sequence, 298 residues long: Protease HtpX homolog (298 aa).

2 helical membrane-spanning segments follow: residues 15–35 (LIMV…GYLF) and 38–58 (SPWT…LIMW). A Zn(2+)-binding site is contributed by H143. E144 is a catalytic residue. H147 is a binding site for Zn(2+). Helical transmembrane passes span 153 to 173 (ILLS…SGIA) and 197 to 217 (IIFK…SASL). Position 227 (E227) interacts with Zn(2+).

Belongs to the peptidase M48B family. The cofactor is Zn(2+).

It localises to the cell membrane. The polypeptide is Protease HtpX homolog (Lactobacillus acidophilus (strain ATCC 700396 / NCK56 / N2 / NCFM)).